The chain runs to 124 residues: Small ribosomal subunit protein uS12 (124 aa).

Asp-89 carries the post-translational modification 3-methylthioaspartic acid.

The protein belongs to the universal ribosomal protein uS12 family. As to quaternary structure, part of the 30S ribosomal subunit. Contacts proteins S8 and S17. May interact with IF1 in the 30S initiation complex.

In terms of biological role, with S4 and S5 plays an important role in translational accuracy. Interacts with and stabilizes bases of the 16S rRNA that are involved in tRNA selection in the A site and with the mRNA backbone. Located at the interface of the 30S and 50S subunits, it traverses the body of the 30S subunit contacting proteins on the other side and probably holding the rRNA structure together. The combined cluster of proteins S8, S12 and S17 appears to hold together the shoulder and platform of the 30S subunit. The protein is Small ribosomal subunit protein uS12 of Shewanella sp. (strain ANA-3).